We begin with the raw amino-acid sequence, 169 residues long: TPD1 protein homolog 1B (169 aa).

Residues 1-25 (MADCTTMRLASSVTIILLLLVASQA) form the signal peptide.

Expressed in roots, and at low levels in anthers during meiosis.

Its function is as follows. May play a role during anther development. In Oryza sativa subsp. japonica (Rice), this protein is TPD1 protein homolog 1B.